The primary structure comprises 186 residues: Probable RNA 2'-phosphotransferase (186 aa).

The protein belongs to the KptA/TPT1 family.

Removes the 2'-phosphate from RNA via an intermediate in which the phosphate is ADP-ribosylated by NAD followed by a presumed transesterification to release the RNA and generate ADP-ribose 1''-2''-cyclic phosphate (APPR&gt;P). May function as an ADP-ribosylase. The polypeptide is Probable RNA 2'-phosphotransferase (Hahella chejuensis (strain KCTC 2396)).